Here is a 490-residue protein sequence, read N- to C-terminus: Hydroxysteroid dehydrogenase-like protein 2 (490 aa).

Residues 17–23 (GASRGIG), Lys42, and Asp74 each bind NADP(+). N6-(2-hydroxyisobutyryl)lysine is present on Lys42. Lys116 bears the N6-acetyllysine mark. Residue Tyr168 is the Proton acceptor of the active site. Lys172 is an NADP(+) binding site. The span at 282–301 (MEEKESNDSVPEVKEEKLQL) shows a compositional bias: basic and acidic residues. A disordered region spans residues 282-370 (MEEKESNDSV…PRQQPQPFVQ (89 aa)). The segment covering 302-367 (QEESQLQKQP…QPRPRQQPQP (66 aa)) has biased composition (low complexity). The region spanning 380-487 (GAVEETFRIV…KLEKLMTQMN (108 aa)) is the SCP2 domain. N6-succinyllysine is present on Lys390.

It belongs to the short-chain dehydrogenases/reductases (SDR) family. In terms of tissue distribution, widely expressed.

It is found in the peroxisome. The protein resides in the mitochondrion. In terms of biological role, has apparently no steroid dehydrogenase activity. Controls bile acid (BA) and lipid metabolism in response to nutritional cues. In Mus musculus (Mouse), this protein is Hydroxysteroid dehydrogenase-like protein 2 (Hsdl2).